The following is a 559-amino-acid chain: Formate--tetrahydrofolate ligase (559 aa).

68-75 (TPAGEGKS) is a binding site for ATP.

Belongs to the formate--tetrahydrofolate ligase family.

It carries out the reaction (6S)-5,6,7,8-tetrahydrofolate + formate + ATP = (6R)-10-formyltetrahydrofolate + ADP + phosphate. Its pathway is one-carbon metabolism; tetrahydrofolate interconversion. This Lactobacillus gasseri (strain ATCC 33323 / DSM 20243 / BCRC 14619 / CIP 102991 / JCM 1131 / KCTC 3163 / NCIMB 11718 / NCTC 13722 / AM63) protein is Formate--tetrahydrofolate ligase.